The chain runs to 376 residues: UPF0754 membrane protein SSP0953 (376 aa).

2 consecutive transmembrane segments (helical) span residues Phe4 to Ile24 and Phe356 to Val376.

The protein belongs to the UPF0754 family.

The protein resides in the cell membrane. This Staphylococcus saprophyticus subsp. saprophyticus (strain ATCC 15305 / DSM 20229 / NCIMB 8711 / NCTC 7292 / S-41) protein is UPF0754 membrane protein SSP0953.